A 61-amino-acid polypeptide reads, in one-letter code: Temporin-CG3 (61 aa).

The signal sequence occupies residues 1–22 (MFTMKKPLLLLFFLATINLSLC). Residues 23–44 (EQERNAEEERRDEPDERNAEVE) constitute a propeptide, removed in mature form.

It belongs to the frog skin active peptide (FSAP) family. Temporin subfamily. As to expression, expressed by the skin glands.

It localises to the secreted. Its function is as follows. Antimicrobial peptide active against a variety of Gram-positive bacterial strains but not against Gram-negative bacteria. Has weak antifungal activity against a slime mold isolate. Has weak hemolytic activity against human erythrocytes. In Amolops chunganensis (Chungan torrent frog), this protein is Temporin-CG3.